We begin with the raw amino-acid sequence, 537 residues long: Chaperonin GroEL (537 aa).

ATP-binding positions include 29–32, 86–90, glycine 413, and aspartate 492; these read TLGP and DGTTT.

It belongs to the chaperonin (HSP60) family. As to quaternary structure, forms a cylinder of 14 subunits composed of two heptameric rings stacked back-to-back. Interacts with the co-chaperonin GroES.

It localises to the cytoplasm. The catalysed reaction is ATP + H2O + a folded polypeptide = ADP + phosphate + an unfolded polypeptide.. Together with its co-chaperonin GroES, plays an essential role in assisting protein folding. The GroEL-GroES system forms a nano-cage that allows encapsulation of the non-native substrate proteins and provides a physical environment optimized to promote and accelerate protein folding. The polypeptide is Chaperonin GroEL (Dehalococcoides mccartyi (strain ATCC BAA-2266 / KCTC 15142 / 195) (Dehalococcoides ethenogenes (strain 195))).